Reading from the N-terminus, the 409-residue chain is tRNA-specific 2-thiouridylase MnmA (409 aa).

Residues 43-50 (AMSGGVDS) and Leu69 each bind ATP. The active-site Nucleophile is the Cys137. The cysteines at positions 137 and 235 are disulfide-linked. Gly161 is a binding site for ATP. Residues 185 to 187 (KDQ) are interaction with tRNA. Cys235 (cysteine persulfide intermediate) is an active-site residue.

It belongs to the MnmA/TRMU family.

The protein resides in the cytoplasm. The catalysed reaction is S-sulfanyl-L-cysteinyl-[protein] + uridine(34) in tRNA + AH2 + ATP = 2-thiouridine(34) in tRNA + L-cysteinyl-[protein] + A + AMP + diphosphate + H(+). Functionally, catalyzes the 2-thiolation of uridine at the wobble position (U34) of tRNA, leading to the formation of s(2)U34. In Caulobacter sp. (strain K31), this protein is tRNA-specific 2-thiouridylase MnmA.